The chain runs to 342 residues: MSAPGGPLARLEARVTREWQRRGALAWALTPFACVFGLCAALRRTAYAQGWKQPVDVGVPVVVVGNVTVGGTGKTPTVIALVDALRAAGFTPGVVSRGYGANVKTPTAVTPASRASAAGDEPLLIARRTDAPVWVCPDRVAAAQALRAAHPDVDVIVSDDGLQHYRLARTVELVVFDHRLGGNGFLLPAGPLREPLSRHRDATLVNDPYSGALPPWPDTYALALTPGAAWHLDQPALRRPLSQFAHERVLAAAGIGAPERFFATLRAAGLAPTTRALPDHYAFADNPFVDDAVDAILITEKDAVKLGASWRDARLWVVPVEAALDPRLIALVVEKLRGRSPA.

68 to 75 (TVGGTGKT) is an ATP binding site.

It belongs to the LpxK family.

The catalysed reaction is a lipid A disaccharide + ATP = a lipid IVA + ADP + H(+). The protein operates within glycolipid biosynthesis; lipid IV(A) biosynthesis; lipid IV(A) from (3R)-3-hydroxytetradecanoyl-[acyl-carrier-protein] and UDP-N-acetyl-alpha-D-glucosamine: step 6/6. Transfers the gamma-phosphate of ATP to the 4'-position of a tetraacyldisaccharide 1-phosphate intermediate (termed DS-1-P) to form tetraacyldisaccharide 1,4'-bis-phosphate (lipid IVA). This is Tetraacyldisaccharide 4'-kinase from Burkholderia ambifaria (strain ATCC BAA-244 / DSM 16087 / CCUG 44356 / LMG 19182 / AMMD) (Burkholderia cepacia (strain AMMD)).